The sequence spans 586 residues: Phosphomethylpyrimidine synthase (586 aa).

The disordered stretch occupies residues 1 to 33 (MKQSVSAEQIELKSSLPGSKKVYVDGPREGMKV). A compositionally biased stretch (basic and acidic residues) spans 22–33 (VYVDGPREGMKV). Substrate contacts are provided by residues Asn-193, Met-222, Tyr-251, His-287, 307 to 309 (SRG), 348 to 351 (DGLR), and Glu-387. Position 391 (His-391) interacts with Zn(2+). Tyr-414 provides a ligand contact to substrate. His-455 is a Zn(2+) binding site. [4Fe-4S] cluster contacts are provided by Cys-535, Cys-538, and Cys-543.

This sequence belongs to the ThiC family. Requires [4Fe-4S] cluster as cofactor.

It catalyses the reaction 5-amino-1-(5-phospho-beta-D-ribosyl)imidazole + S-adenosyl-L-methionine = 4-amino-2-methyl-5-(phosphooxymethyl)pyrimidine + CO + 5'-deoxyadenosine + formate + L-methionine + 3 H(+). The protein operates within cofactor biosynthesis; thiamine diphosphate biosynthesis. Its function is as follows. Catalyzes the synthesis of the hydroxymethylpyrimidine phosphate (HMP-P) moiety of thiamine from aminoimidazole ribotide (AIR) in a radical S-adenosyl-L-methionine (SAM)-dependent reaction. In Bacillus cereus (strain B4264), this protein is Phosphomethylpyrimidine synthase.